Consider the following 874-residue polypeptide: Probable inorganic carbon transporter subunit DabA (874 aa).

Zn(2+) is bound by residues Cys398, Asp400, His580, and Cys595.

This sequence belongs to the inorganic carbon transporter (TC 9.A.2) DabA family. In terms of assembly, forms a complex with DabB. Requires Zn(2+) as cofactor.

It is found in the cell membrane. In terms of biological role, part of an energy-coupled inorganic carbon pump. This is Probable inorganic carbon transporter subunit DabA from Bacillus cereus (strain ATCC 10987 / NRS 248).